Reading from the N-terminus, the 399-residue chain is Ribonuclease D (399 aa).

The 167-residue stretch at 31–197 (RVVTDNTALL…PLYHILEKEL (167 aa)) folds into the 3'-5' exonuclease domain. Residues 239-318 (NPLELSRLRV…SQARRISSND (80 aa)) enclose the HRDC domain.

This sequence belongs to the RNase D family. The cofactor is a divalent metal cation.

The protein localises to the cytoplasm. The enzyme catalyses Exonucleolytic cleavage that removes extra residues from the 3'-terminus of tRNA to produce 5'-mononucleotides.. Functionally, exonuclease involved in the 3' processing of various precursor tRNAs. Initiates hydrolysis at the 3'-terminus of an RNA molecule and releases 5'-mononucleotides. In Haemophilus influenzae (strain ATCC 51907 / DSM 11121 / KW20 / Rd), this protein is Ribonuclease D.